Here is a 527-residue protein sequence, read N- to C-terminus: Tyrosine-protein kinase TXK (527 aa).

Positions 35–79 (DEELPEKYTQRRRPWLSQLSNKKQSNTGRVQPSKRKPLPPLPPSE) are disordered. Residues 51-64 (SQLSNKKQSNTGRV) are compositionally biased toward polar residues. Residues 68-73 (KRKPLP) carry the Nuclear localization signal motif. Positions 82 to 142 (EEKIQVKALY…PSNYVTENKI (61 aa)) constitute an SH3 domain. Tyr91 is subject to Phosphotyrosine; by autocatalysis. The 97-residue stretch at 150 to 246 (WYHRNITRNQ…GLMTRLRYPV (97 aa)) folds into the SH2 domain. One can recognise a Protein kinase domain in the interval 271–527 (LAFIKEIGSG…RAVTEIAETW (257 aa)). ATP-binding positions include 277–285 (IGSGQFGVV) and Lys299. Catalysis depends on Asp390, which acts as the Proton acceptor. The residue at position 420 (Tyr420) is a Phosphotyrosine; by FYN and autocatalysis.

This sequence belongs to the protein kinase superfamily. Tyr protein kinase family. TEC subfamily. In terms of assembly, interacts with PARP1 and EEF1A1. Interacts with SH2D2A. Interacts with FYN. In terms of processing, phosphorylated at Tyr-420 by FYN. Autophosphorylation at Tyr-91 is critical for the activation of TXK, leading to the up-regulation of IFN-gamma gene transcription. Post-translationally, the cysteine string at the N-terminus is palmitoylated and required for the proper subcellular location. In terms of tissue distribution, expressed in T-cells and some myeloid cell lines. Expressed in Th1/Th0 cells with IFN-gamma-producing potential.

It localises to the cytoplasm. It is found in the nucleus. The protein localises to the cell membrane. The catalysed reaction is L-tyrosyl-[protein] + ATP = O-phospho-L-tyrosyl-[protein] + ADP + H(+). Activated by phosphorylation by FYN. Functionally, non-receptor tyrosine kinase that plays a redundant role with ITK in regulation of the adaptive immune response. Regulates the development, function and differentiation of conventional T-cells and nonconventional NKT-cells. When antigen presenting cells (APC) activate T-cell receptor (TCR), a series of phosphorylation leads to the recruitment of TXK to the cell membrane, where it is phosphorylated at Tyr-420. Phosphorylation leads to TXK full activation. Also contributes to signaling from many receptors and participates in multiple downstream pathways, including regulation of the actin cytoskeleton. Like ITK, can phosphorylate PLCG1, leading to its localization in lipid rafts and activation, followed by subsequent cleavage of its substrates. In turn, the endoplasmic reticulum releases calcium in the cytoplasm and the nuclear activator of activated T-cells (NFAT) translocates into the nucleus to perform its transcriptional duty. Plays a role in the positive regulation of IFNG transcription in T-helper 1 cells as part of an IFNG promoter-binding complex with PARP1 and EEF1A1. Within the complex, phosphorylates both PARP1 and EEF1A1. Also phosphorylates key sites in LCP2 leading to the up-regulation of Th1 preferred cytokine IL-2. Phosphorylates 'Tyr-201' of CTLA4 which leads to the association of PI-3 kinase with the CTLA4 receptor. This Homo sapiens (Human) protein is Tyrosine-protein kinase TXK (TXK).